The chain runs to 231 residues: Aminodeoxyfutalosine nucleosidase (231 aa).

Residue glutamate 14 is the Proton acceptor of the active site. Residues glycine 81, valine 155, and 175–176 (ME) contribute to the substrate site. Aspartate 199 serves as the catalytic Proton donor.

The protein belongs to the PNP/UDP phosphorylase family. In terms of assembly, homodimer.

The catalysed reaction is 6-amino-6-deoxyfutalosine + H2O = dehypoxanthine futalosine + adenine. It catalyses the reaction S-adenosyl-L-homocysteine + H2O = S-(5-deoxy-D-ribos-5-yl)-L-homocysteine + adenine. It carries out the reaction S-methyl-5'-thioadenosine + H2O = 5-(methylsulfanyl)-D-ribose + adenine. The enzyme catalyses 5'-deoxyadenosine + H2O = 5-deoxy-D-ribose + adenine. It functions in the pathway quinol/quinone metabolism; menaquinone biosynthesis. It participates in amino-acid biosynthesis; L-methionine biosynthesis via salvage pathway; S-methyl-5-thio-alpha-D-ribose 1-phosphate from S-methyl-5'-thioadenosine (hydrolase route): step 1/2. Catalyzes the direct conversion of aminodeoxyfutalosine (AFL) into dehypoxanthine futalosine (DHFL) and adenine via the hydrolysis of the N-glycosidic bond; this reaction seems to represent an essential step in the menaquinone biosynthesis pathway in Helicobacter species. Can also probably catalyzes the hydrolysis of 5'-methylthioadenosine (MTA) and S-adenosylhomocysteine (SAH) to adenine and the corresponding thioribose, 5'-methylthioribose and S-ribosylhomocysteine, respectively. These other activities highlight the tremendous versatility of the enzyme, which also plays key roles in S-adenosylmethionine recycling and in the biosynthesis of the quorum-sensing molecule autoinducer-2. Does not act on futalosine (FL) as substrate. The polypeptide is Aminodeoxyfutalosine nucleosidase (mtnN) (Helicobacter pylori (strain ATCC 700392 / 26695) (Campylobacter pylori)).